The chain runs to 414 residues: Esterase FrsA (414 aa).

Belongs to the FrsA family.

It carries out the reaction a carboxylic ester + H2O = an alcohol + a carboxylate + H(+). Its function is as follows. Catalyzes the hydrolysis of esters. In Escherichia coli O45:K1 (strain S88 / ExPEC), this protein is Esterase FrsA.